The chain runs to 4235 residues: Tenellin synthetase (4235 aa).

The Ketosynthase family 3 (KS3) domain maps to S15–R455. Active-site for beta-ketoacyl synthase activity residues include C189, H326, and H375. A malonyl-CoA:ACP transacylase (MAT) domain region spans residues I590 to A924. The N-terminal hotdog fold stretch occupies residues H993–K1135. Residues H993–P1310 are dehydratase (DH) domain. In terms of domain architecture, PKS/mFAS DH spans H993–S1313. H1025 (proton acceptor; for dehydratase activity) is an active-site residue. The C-terminal hotdog fold stretch occupies residues L1158–S1313. The active-site Proton donor; for dehydratase activity is D1217. The tract at residues R1459–D1652 is methyltransferase (MT) domain. Residues T2208–V2381 form a ketoreductase (KR) domain region. In terms of domain architecture, Carrier 1 spans E2500–A2580. The residue at position 2540 (S2540) is an O-(pantetheine 4'-phosphoryl)serine. The tract at residues R2587–Q2709 is disordered. A compositionally biased stretch (basic and acidic residues) spans N2605–E2619. Composition is skewed to polar residues over residues G2645–S2659 and Q2666–E2678. Residues S2679–N2695 show a composition bias toward low complexity. The tract at residues R2720–V3163 is condensation (C) domain. The tract at residues C3197–I3609 is adenylation (A) (KR) domain. Residues D3724–M3750 are disordered. The span at A3726–P3742 shows a compositional bias: low complexity. Positions E3748–R3833 constitute a Carrier 2 domain. S3793 is modified (O-(pantetheine 4'-phosphoryl)serine). Residues E3860–T3889 form a disordered region. Residues S3865 to S3882 show a composition bias toward low complexity. Residues L3896–V4141 form a reductase (RED) domain region.

It in the C-terminal section; belongs to the NRP synthetase family.

The protein operates within secondary metabolite biosynthesis. Functionally, hybrid PKS-NRPS synthetase; part of the gene cluster that mediates the biosynthesis of tenellin-type 2-pyridones, iron-chelating compounds involved in iron stress tolerance, competition with the natural competitor fungus Metarhizium robertsii and insect hosts infection. TenS catalyzes the assembly of the polyketide-amino acid backbone. Because tenS lacks a designated enoylreductase (ER) domain, the required activity is provided the enoyl reductase tenC. Upon formation of the polyketide backbone on the thiotemplate, the triketide is transferred to the NRPS module and linked to tyrosine to produce the pyrrolidine-2-dione intermediates, including pretellinin A, 11-hydropretellenin A, 12-hydropretellenin A, 13-hydropretellenin A, 14-hydropretellenin A, 12-oxopretellenin A and prototellinin D. The pathway begins with the assembly of the polyketide-amino acid backbone by the hybrid PKS-NRPS tenS with the help of the enoyl reductase tenC. These enzymes catalyze the synthesis of the pyrrolidine-2-dione intermediates pretellinin A, 11-hydropretellenin A, 12-hydropretellenin A, 13-hydropretellenin A, 14-hydropretellenin A, 12-oxopretellenin A and prototellinin D. The cytochrome P450 monooxygenase tenA then catalyzes an oxidative ring expansion of pretenellin A and 14-hydropretellenin A to form the 2-pyridone core, leading to pretenellin B and pyridovericin, respectively. The cytochrome P450 monooxygenase tenB is then required for the selective N-hydroxylation of the 2-pyridone nitrogen of yield tellinin and 15-hydroxytellenin (15-HT), respectively. The UDP-glucosyltransferase GT1 and the methyltransferase MT1, located outside the tenS gene cluster, contribute to the stepwise glycosylation and methylation of 15-HT to obtain the glycoside pyridovericin-N-O-(4-O-methyl-beta-D-glucopyranoside) (PMGP). Additional related compounds such as 1-O-methyl-15-HT, (8Z)-1-O-methyl-15-HT, and O-methyltenellin A are also produced but the enzymes involved in their biosynthesis have still to be determined. The sequence is that of Tenellin synthetase from Beauveria bassiana (strain ARSEF 2860) (White muscardine disease fungus).